We begin with the raw amino-acid sequence, 196 residues long: Imidazole glycerol phosphate synthase subunit HisH (196 aa).

Positions 2–196 (KIIIINTNCS…EQLIKNFLEI (195 aa)) constitute a Glutamine amidotransferase type-1 domain. Cys-77 acts as the Nucleophile in catalysis. Catalysis depends on residues His-178 and Glu-180.

As to quaternary structure, heterodimer of HisH and HisF.

The protein localises to the cytoplasm. The catalysed reaction is 5-[(5-phospho-1-deoxy-D-ribulos-1-ylimino)methylamino]-1-(5-phospho-beta-D-ribosyl)imidazole-4-carboxamide + L-glutamine = D-erythro-1-(imidazol-4-yl)glycerol 3-phosphate + 5-amino-1-(5-phospho-beta-D-ribosyl)imidazole-4-carboxamide + L-glutamate + H(+). It carries out the reaction L-glutamine + H2O = L-glutamate + NH4(+). The protein operates within amino-acid biosynthesis; L-histidine biosynthesis; L-histidine from 5-phospho-alpha-D-ribose 1-diphosphate: step 5/9. Functionally, IGPS catalyzes the conversion of PRFAR and glutamine to IGP, AICAR and glutamate. The HisH subunit catalyzes the hydrolysis of glutamine to glutamate and ammonia as part of the synthesis of IGP and AICAR. The resulting ammonia molecule is channeled to the active site of HisF. The protein is Imidazole glycerol phosphate synthase subunit HisH of Blochmanniella floridana.